A 570-amino-acid chain; its full sequence is MRRLGPFHPRVHWAAPPSLSSGLHRLLFLRGTRIPSSTTLSPPRHDSLSLDGGTVNPPRVREPTGREAFGPSPASSDWLPARWRNGRGGRPRARLCSGWTAAEEARRNPTLGGLLGRQRLLLRMGGGRLGAPMERHGRASATSVSSAGEQAAGDPEGRRQEPLRRRASSASVPAVGASAEGTRRDRLGSYSGPTSVSRQRVESLRKKRPLFPWFGLDIGGTLVKLVYFEPKDITAEEEEEEVESLKSIRKYLTSNVAYGSTGIRDVHLELKDLTLCGRKGNLHFIRFPTHDMPAFIQMGRDKNFSSLHTVFCATGGGAYKFEQDFLTIGDLQLCKLDELDCLIKGILYIDSVGFNGRSQCYYFENPADSEKCQKLPFDLKNPYPLLLVNIGSGVSILAVYSKDNYKRVTGTSLGGGTFFGLCCLLTGCTTFEEALEMASRGDSTKVDKLVRDIYGGDYERFGLPGWAVASSFGNMMSKEKREAVSKEDLARATLITITNNIGSIARMCALNENINQVVFVGNFLRINTIAMRLLAYALDYWSKGQLKALFSEHEGYFGAVGALLELLKIP.

Residues 1 to 31 (MRRLGPFHPRVHWAAPPSLSSGLHRLLFLRG) constitute a mitochondrion transit peptide. 2 disordered regions span residues 34–94 (IPSS…PRAR) and 127–198 (GRLG…SVSR). The short motif at 82–94 (RWRNGRGGRPRAR) is the Nucleolar localization signal element. Basic residues predominate over residues 84–93 (RNGRGGRPRA). Over residues 155-164 (PEGRRQEPLR) the composition is skewed to basic and acidic residues. Phosphoserine occurs at positions 168, 169, and 189. Residues 168-179 (SSASVPAVGASA) are compositionally biased toward low complexity. Positions 268-275 (LELKDLTL) match the Nuclear export signal motif. Glu-338 serves as the catalytic Proton acceptor. Acetyl-CoA contacts are provided by Ser-392, Ser-395, and Arg-407.

This sequence belongs to the type II pantothenate kinase family. As to quaternary structure, homodimer. Synthesized as a 62-kDa precursor which is proteolytically processed by the mitochondrial-processing peptidase (MPP) via a 59-kDa intermediate to yield the mature mitochondrial 48-kDa subunit. As to expression, expressed in the brain (at protein level). Ubiquitous. Highly expressed in the testis. Expressed in the umbilical vein endothelial cells (HUVEC).

It is found in the mitochondrion. The protein resides in the mitochondrion intermembrane space. The protein localises to the nucleus. Its subcellular location is the cytoplasm. It carries out the reaction (R)-pantothenate + ATP = (R)-4'-phosphopantothenate + ADP + H(+). The protein operates within cofactor biosynthesis; coenzyme A biosynthesis; CoA from (R)-pantothenate: step 1/5. Its activity is regulated as follows. Strongly inhibited by acetyl-CoA and its thioesters. Activated by palmitoylcarnitine. Functionally, mitochondrial isoform that catalyzes the phosphorylation of pantothenate to generate 4'-phosphopantothenate in the first and rate-determining step of coenzyme A (CoA) synthesis. Required for angiogenic activity of umbilical vein of endothelial cells (HUVEC). Cytoplasmic isoform that catalyzes the phosphorylation of pantothenate to generate 4'-phosphopantothenate in the first and rate-determining step of coenzyme A (CoA) synthesis. This chain is Pantothenate kinase 2, mitochondrial (PANK2), found in Homo sapiens (Human).